A 246-amino-acid chain; its full sequence is Phosphomannomutase (246 aa).

Catalysis depends on aspartate 9, which acts as the Nucleophile. Positions 9 and 11 each coordinate Mg(2+). Aspartate 11 serves as the catalytic Proton donor/acceptor. Residues arginine 121, arginine 132, arginine 139, serine 179, and aspartate 181 each coordinate alpha-D-mannose 1-phosphate. Position 207 (aspartate 207) interacts with Mg(2+).

This sequence belongs to the eukaryotic PMM family. Homodimer.

It is found in the cytoplasm. The catalysed reaction is alpha-D-mannose 1-phosphate = D-mannose 6-phosphate. The protein operates within nucleotide-sugar biosynthesis; GDP-alpha-D-mannose biosynthesis; alpha-D-mannose 1-phosphate from D-fructose 6-phosphate: step 2/2. In terms of biological role, involved in the synthesis of the GDP-mannose and dolichol-phosphate-mannose required for a number of critical mannosyl transfer reactions. This Babesia bovis protein is Phosphomannomutase (PMM).